The following is a 684-amino-acid chain: Sec1 family domain-containing protein 2 (684 aa).

Belongs to the STXBP/unc-18/SEC1 family.

Its function is as follows. May be involved in protein transport. The protein is Sec1 family domain-containing protein 2 (SCFD2) of Homo sapiens (Human).